The following is a 424-amino-acid chain: MAQSLAVQGGSAVRTRPWPVWPRPAAGAAEAVQQVLSSGRWSISGPYRGAASQERRFARAFAEYNGVAHCVPAASGTASLMLALEACGVGAGDEVIVPGLSWVASGSTVLGVNAVPVFCDVDPRTLCLDPEAVEAAVTERTKAIVVVHLYSAVADMDALTALAERHSLPLIEDCAQAHGAAYRGVKVGALATAGTFSMQHSKMLTSGEGGAVITRDADFARRVEHLRADGRVLAGQRPGPGEMELVETGELMGNNRCLSEFQAALLTEQLKDLDAQHAIRRRNAALLDGLLRESGYVPQETSEGTSTRTHYTYAVRLPEGRLTHVGLATVARALSAELGCTVAPSYAPITRNRLYDPASRRRFALGVEHQALTDPKRFELPVAEDAARRVLTLHHAALLGAEDDMRDIAAAFGKVLRHGADLTA.

Lys-202 bears the N6-(pyridoxal phosphate)lysine mark.

Belongs to the DegT/DnrJ/EryC1 family. L-glutamine:2-deoxy-scyllo-inosose/scyllo-inosose aminotransferase subfamily. The cofactor is pyridoxal 5'-phosphate.

It catalyses the reaction 2-deoxy-L-scyllo-inosose + L-glutamine = 2-deoxy-scyllo-inosamine + 2-oxoglutaramate. The enzyme catalyses 3-amino-2,3-dideoxy-scyllo-inosose + L-glutamine = 2-deoxystreptamine + 2-oxoglutaramate. It participates in metabolic intermediate biosynthesis; 2-deoxystreptamine biosynthesis; 2-deoxystreptamine from D-glucose 6-phosphate: step 2/4. Its pathway is antibiotic biosynthesis; lividomycin biosynthesis. Its function is as follows. Catalyzes the PLP-dependent transamination of 2-deoxy-scyllo-inosose (2-DOI) to form 2-deoxy-scyllo-inosamine (2-DOIA) using L-glutamine as the amino donor. Also catalyzes the transamination of 3-amino-2,3-dideoxy-scyllo-inosose (keto-2-DOIA) into 2-deoxystreptamine (2-DOS). The sequence is that of L-glutamine:2-deoxy-scyllo-inosose aminotransferase (livS) from Streptomyces lividus.